Here is an 804-residue protein sequence, read N- to C-terminus: DNA gyrase subunit A (804 aa).

The Topo IIA-type catalytic domain maps to 31-495 (IPDVRDGLKP…QSIEYNEEEL (465 aa)). Tyr-119 acts as the O-(5'-phospho-DNA)-tyrosine intermediate in catalysis. Positions 522 to 528 (QKRGGKG) match the GyrA-box motif.

Belongs to the type II topoisomerase GyrA/ParC subunit family. Heterotetramer, composed of two GyrA and two GyrB chains. In the heterotetramer, GyrA contains the active site tyrosine that forms a transient covalent intermediate with DNA, while GyrB binds cofactors and catalyzes ATP hydrolysis.

The protein resides in the cytoplasm. The enzyme catalyses ATP-dependent breakage, passage and rejoining of double-stranded DNA.. A type II topoisomerase that negatively supercoils closed circular double-stranded (ds) DNA in an ATP-dependent manner to modulate DNA topology and maintain chromosomes in an underwound state. Negative supercoiling favors strand separation, and DNA replication, transcription, recombination and repair, all of which involve strand separation. Also able to catalyze the interconversion of other topological isomers of dsDNA rings, including catenanes and knotted rings. Type II topoisomerases break and join 2 DNA strands simultaneously in an ATP-dependent manner. The sequence is that of DNA gyrase subunit A from Thermotoga maritima (strain ATCC 43589 / DSM 3109 / JCM 10099 / NBRC 100826 / MSB8).